A 177-amino-acid polypeptide reads, in one-letter code: Alkyl hydroperoxide reductase AhpD (177 aa).

The active-site Proton donor is the Cys131. Cys131 and Cys134 are oxidised to a cystine. Cys134 serves as the catalytic Cysteine sulfenic acid (-SOH) intermediate.

It belongs to the AhpD family.

It catalyses the reaction N(6)-[(R)-dihydrolipoyl]-L-lysyl-[lipoyl-carrier protein] + a hydroperoxide = N(6)-[(R)-lipoyl]-L-lysyl-[lipoyl-carrier protein] + an alcohol + H2O. In terms of biological role, antioxidant protein with alkyl hydroperoxidase activity. Required for the reduction of the AhpC active site cysteine residues and for the regeneration of the AhpC enzyme activity. The chain is Alkyl hydroperoxide reductase AhpD from Solibacter usitatus (strain Ellin6076).